Here is a 210-residue protein sequence, read N- to C-terminus: Pyridoxine/pyridoxamine 5'-phosphate oxidase (210 aa).

Substrate contacts are provided by residues 7 to 10 (REDY) and Lys65. FMN contacts are provided by residues 60-65 (RMVLLK), 75-76 (FT), Arg81, Lys82, and Gln104. Residues Tyr122, Arg126, and Ser130 each coordinate substrate. FMN contacts are provided by residues 139-140 (QS) and Trp183. 189-191 (RLH) contacts substrate. Arg193 provides a ligand contact to FMN.

The protein belongs to the pyridoxamine 5'-phosphate oxidase family. As to quaternary structure, homodimer. It depends on FMN as a cofactor.

It carries out the reaction pyridoxamine 5'-phosphate + O2 + H2O = pyridoxal 5'-phosphate + H2O2 + NH4(+). It catalyses the reaction pyridoxine 5'-phosphate + O2 = pyridoxal 5'-phosphate + H2O2. Its pathway is cofactor metabolism; pyridoxal 5'-phosphate salvage; pyridoxal 5'-phosphate from pyridoxamine 5'-phosphate: step 1/1. The protein operates within cofactor metabolism; pyridoxal 5'-phosphate salvage; pyridoxal 5'-phosphate from pyridoxine 5'-phosphate: step 1/1. Functionally, catalyzes the oxidation of either pyridoxine 5'-phosphate (PNP) or pyridoxamine 5'-phosphate (PMP) into pyridoxal 5'-phosphate (PLP). The chain is Pyridoxine/pyridoxamine 5'-phosphate oxidase from Neisseria meningitidis serogroup B (strain ATCC BAA-335 / MC58).